The primary structure comprises 227 residues: Lipoprotein-releasing system ATP-binding protein LolD (227 aa).

An ABC transporter domain is found at 6 to 227 (LTSQKLYKSY…LHEGSLYARE (222 aa)). 42-49 (GPSGSGKS) contributes to the ATP binding site.

This sequence belongs to the ABC transporter superfamily. Lipoprotein translocase (TC 3.A.1.125) family. The complex is composed of two ATP-binding proteins (LolD) and two transmembrane proteins (LolC and LolE).

The protein resides in the cell inner membrane. In terms of biological role, part of the ABC transporter complex LolCDE involved in the translocation of mature outer membrane-directed lipoproteins, from the inner membrane to the periplasmic chaperone, LolA. Responsible for the formation of the LolA-lipoprotein complex in an ATP-dependent manner. The sequence is that of Lipoprotein-releasing system ATP-binding protein LolD from Legionella pneumophila (strain Lens).